The primary structure comprises 225 residues: NAD(P)H-quinone oxidoreductase subunit K, chloroplastic (225 aa).

[4Fe-4S] cluster contacts are provided by Cys-43, Cys-44, Cys-108, and Cys-139.

Belongs to the complex I 20 kDa subunit family. NDH is composed of at least 16 different subunits, 5 of which are encoded in the nucleus. The cofactor is [4Fe-4S] cluster.

Its subcellular location is the plastid. It localises to the chloroplast thylakoid membrane. The catalysed reaction is a plastoquinone + NADH + (n+1) H(+)(in) = a plastoquinol + NAD(+) + n H(+)(out). The enzyme catalyses a plastoquinone + NADPH + (n+1) H(+)(in) = a plastoquinol + NADP(+) + n H(+)(out). Functionally, NDH shuttles electrons from NAD(P)H:plastoquinone, via FMN and iron-sulfur (Fe-S) centers, to quinones in the photosynthetic chain and possibly in a chloroplast respiratory chain. The immediate electron acceptor for the enzyme in this species is believed to be plastoquinone. Couples the redox reaction to proton translocation, and thus conserves the redox energy in a proton gradient. In Helianthus annuus (Common sunflower), this protein is NAD(P)H-quinone oxidoreductase subunit K, chloroplastic.